The chain runs to 545 residues: Glucose-6-phosphate isomerase (545 aa).

Catalysis depends on E351, which acts as the Proton donor. Catalysis depends on residues H382 and K510.

This sequence belongs to the GPI family.

It is found in the cytoplasm. It carries out the reaction alpha-D-glucose 6-phosphate = beta-D-fructose 6-phosphate. It functions in the pathway carbohydrate biosynthesis; gluconeogenesis. It participates in carbohydrate degradation; glycolysis; D-glyceraldehyde 3-phosphate and glycerone phosphate from D-glucose: step 2/4. Its function is as follows. Catalyzes the reversible isomerization of glucose-6-phosphate to fructose-6-phosphate. The chain is Glucose-6-phosphate isomerase from Shewanella sp. (strain ANA-3).